The chain runs to 423 residues: Histidine--tRNA ligase (423 aa).

The protein belongs to the class-II aminoacyl-tRNA synthetase family. Homodimer.

The protein localises to the cytoplasm. It carries out the reaction tRNA(His) + L-histidine + ATP = L-histidyl-tRNA(His) + AMP + diphosphate + H(+). The protein is Histidine--tRNA ligase of Rhodococcus jostii (strain RHA1).